A 188-amino-acid polypeptide reads, in one-letter code: Molybdopterin synthase catalytic subunit (188 aa).

Ser20 carries the phosphoserine modification. Residues 143–144, Lys159, and 166–168 each bind substrate; these read HR and KKE.

The protein belongs to the MoaE family. MOCS2B subfamily. Heterotetramer; composed of 2 small (MOCS2A) and 2 large (MOCS2B) subunits. As to expression, highest levels are found in heart and skeletal muscle. Lower levels are present in brain, kidney and pancreas. Very low levels are found in lung and peripheral blood leukocytes.

It localises to the cytoplasm. The protein resides in the cytosol. It carries out the reaction 2 [molybdopterin-synthase sulfur-carrier protein]-C-terminal-Gly-aminoethanethioate + cyclic pyranopterin phosphate + H2O = molybdopterin + 2 [molybdopterin-synthase sulfur-carrier protein]-C-terminal Gly-Gly + 2 H(+). It functions in the pathway cofactor biosynthesis; molybdopterin biosynthesis. In terms of biological role, catalytic subunit of the molybdopterin synthase complex, a complex that catalyzes the conversion of precursor Z into molybdopterin. Acts by mediating the incorporation of 2 sulfur atoms from thiocarboxylated MOCS2A into precursor Z to generate a dithiolene group. The sequence is that of Molybdopterin synthase catalytic subunit from Homo sapiens (Human).